The primary structure comprises 424 residues: MPLLWLRGFLLASCWIIVRSSPTPGSEGPGAAPDCPSCALATLPKDVPNSQPEMVEAVKKHILNMLHLKKRPEVTQPVPKAALLNAIRKLHVGKVGENGYVEIEDDIGRRAEMNELMEQTSEIITFAESGTARKTLHFEISKEGSDLSVVERAEVWLFLKVPKANRTRTKVTIQLLQKQPQGGVDAGEEAEEMGLMEERNEVLISEKVVDARKSTWHIFPVSSSIQRLLDQGKSSLDVRIACEQCHETGASLVLLGKKKKKEEEGEGKKKDGGDGGAGADEDKEQSHRPFLMLQARQSEDHPHRRRRRGLECDGKVNICCKKQFFVSFKDIGWNDWIIAPSGYHANYCEGECPSHIAGTSGSSLSFHSTVINHYRMRGHSPFANLKSCCVPTKLRPMSMLYYDDGQNIIKKDIQNMIVEECGCS.

The N-terminal stretch at 1–20 (MPLLWLRGFLLASCWIIVRS) is a signal peptide. A propeptide spanning residues 21–308 (SPTPGSEGPG…EDHPHRRRRR (288 aa)) is cleaved from the precursor. N-linked (GlcNAc...) asparagine glycosylation is present at Asn-165. A disordered region spans residues 257 to 288 (KKKKKEEEGEGKKKDGGDGGAGADEDKEQSHR). Residues 261 to 273 (KEEEGEGKKKDGG) are compositionally biased toward basic and acidic residues. 4 cysteine pairs are disulfide-bonded: Cys-312–Cys-320, Cys-319–Cys-389, Cys-348–Cys-421, and Cys-352–Cys-423.

It belongs to the TGF-beta family. In terms of assembly, dimeric, linked by one or more disulfide bonds. Inhibin A is a dimer of alpha/INHA and beta-A/INHBA. Activin A is a homodimer of beta-A/INHBA. Activin AB is a dimer of beta-A/INHBA and beta-B/INHBB. Interacts with FST and FSTL3; these interactions prevent activin A interaction to its type II receptor. Activin A interacts with ACVR2A. Activin A interacts with BMPR2. Inhibin A interacts with ACVR1; this interaction creates a non-signaling complex (NSC) that inhibits ACVR1-mediated BMP signaling. Inhibin A interacts with ACVR2A.

It is found in the secreted. Functionally, inhibins/activins are involved in regulating a number of diverse functions such as hypothalamic and pituitary hormone secretion, gonadal hormone secretion, germ cell development and maturation, erythroid differentiation, insulin secretion, nerve cell survival, embryonic axial development or bone growth, depending on their subunit composition. Its function is as follows. Activin A is a homodimer of INHBA that plays a role in several essential biological processes including embryonic development, stem cell maintenance and differentiation, haematopoiesis, cell proliferation and tissue fibrosis. Signals through type I (such as ACVR1B or ACVR1C) and type II receptors (such as ACVR2A, ACVR2B or BMPR2) which, upon ligand binding, phosphorylate SMAD2 and SMAD3 intracellular signaling mediators that form a complex with SMAD4, translocate to the nucleus and modulate gene expression. Can also activate alternative non-canonical intracellular signaling pathways including the p38 MAPK, extracellular signal-regulated kinases 1/2 (ERK1/2) and c-Jun N-terminal kinases (JNKs) to modulate cell migration and differentiation. Alternatively, promotes osteoblastic differentiation via ACVRL1-SMAD1/5/9 pathway. In addition, can engage the type I receptor ACVR1 to form an ACVR1-activin A-type II receptor non-signaling complex (NSC) that renders receptors unavailable for engagement with BMPs, hence resulting in an apparent inhibition of ACVR1-mediated BMP signaling. Inhibin A is a dimer of alpha/INHA and beta-A/INHBA that functions as a feedback regulator in the hypothalamic-pituitary-gonadal (HPG) axis. Inhibits the secretion of FSH from the anterior pituitary gland by acting on pituitary gonadotrope cells. Antagonizes activin A by binding to the proteoglycan, betaglycan, and forming a stable complex with and, thereby, sequestering type II activin receptors while excluding type I receptor. The chain is Inhibin beta A chain (INHBA) from Felis catus (Cat).